The primary structure comprises 124 residues: Small ribosomal subunit protein uS12 (124 aa).

The disordered stretch occupies residues 1-32 (MPTIQQLVRKGRKDKATKTKTPALKGSPQRRG). Residue aspartate 89 is modified to 3-methylthioaspartic acid. A disordered region spans residues 105-124 (QGVRGRQQARSRYGAKKEKK). Positions 111 to 124 (QQARSRYGAKKEKK) are enriched in basic residues.

It belongs to the universal ribosomal protein uS12 family. Part of the 30S ribosomal subunit. Contacts proteins S8 and S17. May interact with IF1 in the 30S initiation complex.

In terms of biological role, with S4 and S5 plays an important role in translational accuracy. Functionally, interacts with and stabilizes bases of the 16S rRNA that are involved in tRNA selection in the A site and with the mRNA backbone. Located at the interface of the 30S and 50S subunits, it traverses the body of the 30S subunit contacting proteins on the other side and probably holding the rRNA structure together. The combined cluster of proteins S8, S12 and S17 appears to hold together the shoulder and platform of the 30S subunit. The protein is Small ribosomal subunit protein uS12 of Beutenbergia cavernae (strain ATCC BAA-8 / DSM 12333 / CCUG 43141 / JCM 11478 / NBRC 16432 / NCIMB 13614 / HKI 0122).